A 498-amino-acid polypeptide reads, in one-letter code: MASQGTKRSYEQMETDGERQNATEIRASVGKMIDGIGRFYIQMCTELKLSDYEGRLIQNSLTIERMVLSAFDERRNRYLEEHPSAGKDPKKTGGPIYKRVDRKWMRELILYDKEEIRRIWRQANNGDDATAGLTHMMIWHSNLNDTTYQRTRALVRTGMDPRMCSLMQGSTLPRRSGAAGAAVKGVGTMVMELIRMIKRGINDRNFWRGENGRKTRSAYERMCNILKGKFQTAAQRAMMDQVRESRNPGNAEIEDLIFLARSALILRGSVAHKSCLPACVYGPAVASGYDFEKEGYSLVGIDPFKLLQNSQVYSLIRPNENPAHKSQLVWMACHSAAFEDLRLLSFIRGTKVSPRGKLSTRGVQIASNENMDTMESSTLELRSRYWAIRTRSGGNTNQQRASAGQISVQPTFSVQRNLPFDKSTVMAAFTGNTEGRTSDMRAEIIRMMEDAKPEEVSFRGRGVFELSDEKATNPIVPSFDMSNEGSYFFGDNAEEYDN.

The Unconventional nuclear localization signal signature appears at 1–18; it reads MASQGTKRSYEQMETDGE. Residues 1–21 are disordered; that stretch reads MASQGTKRSYEQMETDGERQN. Positions 8-21 are enriched in basic and acidic residues; sequence RSYEQMETDGERQN. The short motif at 198-216 is the Bipartite nuclear localization signal element; sequence KRGINDRNFWRGENGRKTR.

This sequence belongs to the influenza viruses nucleoprotein family. As to quaternary structure, homomultimerizes to form the nucleocapsid. May bind host exportin-1/XPO1. Binds to viral genomic RNA. Protein-RNA contacts are mediated by a combination of electrostatic interactions between positively charged residues and the phosphate backbone and planar interactions between aromatic side chains and bases. Late in virus-infected cells, may be cleaved from a 56-kDa protein to a 53-kDa protein by a cellular caspase. This cleavage might be a marker for the onset of apoptosis in infected cells or have a specific function in virus host interaction.

Its subcellular location is the virion. The protein localises to the host nucleus. Functionally, encapsidates the negative strand viral RNA, protecting it from nucleases. The encapsidated genomic RNA is termed the ribonucleoprotein (RNP) and serves as template for transcription and replication. The RNP needs to be localized in the host nucleus to start an infectious cycle, but is too large to diffuse through the nuclear pore complex. NP comprises at least 2 nuclear localization signals that are responsible for the active RNP import into the nucleus through cellular importin alpha/beta pathway. Later in the infection, nclear export of RNPs are mediated through viral proteins NEP interacting with M1 which binds nucleoproteins. It is possible that nucleoprotein binds directly host exportin-1/XPO1 and plays an active role in RNPs nuclear export. M1 interaction with RNP seems to hide nucleoprotein's nuclear localization signals. Soon after a virion infects a new cell, M1 dissociates from the RNP under acidification of the virion driven by M2 protein. Dissociation of M1 from RNP unmasks nucleoprotein's nuclear localization signals, targeting the RNP to the nucleus. The protein is Nucleoprotein of Influenza A virus (strain A/Kiev/59/1979 H1N1).